The sequence spans 208 residues: LysM and putative peptidoglycan-binding domain-containing protein 2 (208 aa).

The segment at 1-54 is disordered; it reads MAEFSPVLPPLRDDGGGGRYGQPLFPRSRSGSESDSELSQSLARTKTRSYGSTA. Residues 27 to 42 are compositionally biased toward low complexity; the sequence is RSRSGSESDSELSQSL. The LysM domain occupies 65–109; sequence IEHRVTDGETLQGIALKYGVTMEQIKRVNKLFSNDCIFLRNTLSI. Disordered stretches follow at residues 122–169 and 187–208; these read LSLE…EELS and AARKLKEDGGREEDDTNSYQEI. Polar residues predominate over residues 129–140; the sequence is SEGNTPQESPCV. The segment covering 147-156 has biased composition (pro residues); that stretch reads PSPPPEPSVP.

The polypeptide is LysM and putative peptidoglycan-binding domain-containing protein 2 (lysmd2) (Danio rerio (Zebrafish)).